The primary structure comprises 309 residues: Dehydrogenase/reductase SDR family member 7B (309 aa).

At 1–4 the chain is on the cytoplasmic side; the sequence is MDLT. Residues 5-25 form a helical; Signal-anchor for type II membrane protein membrane-spanning segment; that stretch reads TWAIFPLLLGSIGVYSLYKLL. Over 26–272 the chain is Lumenal; it reads QRLRSGAYLQ…AVGERRKELL (247 aa). Serine 46 and leucine 48 together coordinate NAD(+). Substrate is bound at residue serine 178. NAD(+)-binding residues include tyrosine 191, lysine 195, and threonine 226. Tyrosine 191 serves as the catalytic Proton acceptor.

This sequence belongs to the short-chain dehydrogenases/reductases (SDR) family.

It localises to the endoplasmic reticulum membrane. In terms of biological role, putative oxidoreductase. In Xenopus tropicalis (Western clawed frog), this protein is Dehydrogenase/reductase SDR family member 7B (dhrs7b).